The primary structure comprises 179 residues: Replication restart protein DnaT (179 aa).

Over residues 151–168 the composition is skewed to polar residues; sequence SRSSNGGMPQRDINSVSE. The disordered stretch occupies residues 151-179; the sequence is SRSSNGGMPQRDINSVSEPDNHIPPGFRG.

It belongs to the DnaT family. As to quaternary structure, homooligomerizes. Interacts with PriB. Component of the replication restart primosome. Primosome assembly occurs via a 'hand-off' mechanism. PriA binds to replication forks, subsequently PriB then DnaT bind; DnaT then displaces ssDNA to generate the helicase loading substrate.

Involved in the restart of stalled replication forks, which reloads the replicative helicase on sites other than the origin of replication. Can function in multiple replication restart pathways. Displaces ssDNA from a PriB-ssDNA complex. Probably forms a spiral filament on ssDNA. In Salmonella schwarzengrund (strain CVM19633), this protein is Replication restart protein DnaT.